We begin with the raw amino-acid sequence, 267 residues long: Acyl-[acyl-carrier-protein]--UDP-N-acetylglucosamine O-acyltransferase (267 aa).

Belongs to the transferase hexapeptide repeat family. LpxA subfamily. Homotrimer.

Its subcellular location is the cytoplasm. The catalysed reaction is a (3R)-hydroxyacyl-[ACP] + UDP-N-acetyl-alpha-D-glucosamine = a UDP-3-O-[(3R)-3-hydroxyacyl]-N-acetyl-alpha-D-glucosamine + holo-[ACP]. Its pathway is glycolipid biosynthesis; lipid IV(A) biosynthesis; lipid IV(A) from (3R)-3-hydroxytetradecanoyl-[acyl-carrier-protein] and UDP-N-acetyl-alpha-D-glucosamine: step 1/6. Involved in the biosynthesis of lipid A, a phosphorylated glycolipid that anchors the lipopolysaccharide to the outer membrane of the cell. This chain is Acyl-[acyl-carrier-protein]--UDP-N-acetylglucosamine O-acyltransferase, found in Hamiltonella defensa subsp. Acyrthosiphon pisum (strain 5AT).